The primary structure comprises 377 residues: MDPAARVVRALWPGGCALAWRLGGRPQPLLPTQSRAGFAGAAGGPSPVAAARKGSPRLLGAAALALGGALGLYHTARWHLRAQDLHAERSAAQLSLSSRLQLTLYQYKTCPFCSKVRAFLDFHALPYQVVEVNPVRRAEIKFSSYRKVPILVAQEGESSQQLNDSSVIISALKTYLVSGQPLEEIITYYPAMKAVNEQGKEVTEFGNKYWLMLNEKEAQQVYGGKEARTEEMKWRQWADDWLVHLISPNVYRTPTEALASFDYIVREGKFGAVEGAVAKYMGAAAMYLISKRLKSRHRLQDNVREDLYEAADKWVAAVGKDRPFMGGQKPNLADLAVYGVLRVMEGLDAFDDLMQHTHIQPWYLRVERAITEASPAH.

Topologically, residues 1-57 (MDPAARVVRALWPGGCALAWRLGGRPQPLLPTQSRAGFAGAAGGPSPVAAARKGSPR) are lumenal. A helical transmembrane segment spans residues 58-74 (LLGAAALALGGALGLYH). Residues 75–377 (TARWHLRAQD…RAITEASPAH (303 aa)) are Cytoplasmic-facing. Residues 90-193 (SAAQLSLSSR…EIITYYPAMK (104 aa)) form the Glutaredoxin domain. S95 carries the post-translational modification Phosphoserine. Residues V148 and 164–165 (DS) contribute to the glutathione site. In terms of domain architecture, GST C-terminal spans 263 to 377 (YIVREGKFGA…RAITEASPAH (115 aa)).

It belongs to the GST superfamily. Homodimer. May interact with CEBPB. Interacts with EXOSC10. Synthesized as a Golgi membrane-associated protein, and the proteolytic removal of the N-terminal hydrophobic domain leads to the formation of a mature cytosolic enzyme. As to expression, widely expressed. Expressed in the heart, including apex, inter-ventricular septum, both atria and ventricles, but not in the aorta. Also expressed in fetal heart. Detected in various regions of the brain: cerebellum; occipital, frontal and parietal lobes. Also expressed in the lymph nodes, skeletal muscle, kidney and trachea, but not in the thymus or lung. Overexpressed in colorectal cancer.

It is found in the golgi apparatus membrane. The protein localises to the cytoplasm. It localises to the perinuclear region. The catalysed reaction is prostaglandin H2 = prostaglandin E2. It carries out the reaction prostaglandin H2 = (12S)-hydroxy-(5Z,8E,10E)-heptadecatrienoate + malonaldehyde. The protein operates within lipid metabolism; prostaglandin biosynthesis. Its activity is regulated as follows. Isomerase activity is increased by sulfhydril compounds. Dithiothreitol (DTT) is most effective, followed by dihydrolipoic acid, glutathione (GSH) and 2-mercaptoethanol. Functionally, isomerase that catalyzes the conversion of PGH2 into the more stable prostaglandin E2 (PGE2) (in vitro). The biological function and the GSH-dependent property of PTGES2 is still under debate. In vivo, PTGES2 could form a complex with GSH and heme and would not participate in PGE2 synthesis but would catalyze the degradation of prostaglandin E2 H2 (PGH2) to 12(S)-hydroxy-5(Z),8(E),10(E)-heptadecatrienoic acid (HHT) and malondialdehyde (MDA). This is Prostaglandin E synthase 2 (PTGES2) from Homo sapiens (Human).